The primary structure comprises 211 residues: Pyridoxine/pyridoxamine 5'-phosphate oxidase (211 aa).

Residues 8–11 (RRDY) and K66 each bind substrate. Residues 61 to 66 (RLVLLK), 76 to 77 (FT), R82, K83, and Q105 each bind FMN. 3 residues coordinate substrate: Y123, R127, and S131. Residues 140-141 (QS) and W184 each bind FMN. A substrate-binding site is contributed by 190–192 (RLH). Residue R194 coordinates FMN.

It belongs to the pyridoxamine 5'-phosphate oxidase family. In terms of assembly, homodimer. Requires FMN as cofactor.

The enzyme catalyses pyridoxamine 5'-phosphate + O2 + H2O = pyridoxal 5'-phosphate + H2O2 + NH4(+). It carries out the reaction pyridoxine 5'-phosphate + O2 = pyridoxal 5'-phosphate + H2O2. Its pathway is cofactor metabolism; pyridoxal 5'-phosphate salvage; pyridoxal 5'-phosphate from pyridoxamine 5'-phosphate: step 1/1. The protein operates within cofactor metabolism; pyridoxal 5'-phosphate salvage; pyridoxal 5'-phosphate from pyridoxine 5'-phosphate: step 1/1. Functionally, catalyzes the oxidation of either pyridoxine 5'-phosphate (PNP) or pyridoxamine 5'-phosphate (PMP) into pyridoxal 5'-phosphate (PLP). The protein is Pyridoxine/pyridoxamine 5'-phosphate oxidase of Thermosynechococcus vestitus (strain NIES-2133 / IAM M-273 / BP-1).